We begin with the raw amino-acid sequence, 452 residues long: Proline--tRNA ligase (452 aa).

The protein belongs to the class-II aminoacyl-tRNA synthetase family. ProS type 2 subfamily. As to quaternary structure, homodimer.

It is found in the cytoplasm. The enzyme catalyses tRNA(Pro) + L-proline + ATP = L-prolyl-tRNA(Pro) + AMP + diphosphate. Its function is as follows. Catalyzes the attachment of proline to tRNA(Pro) in a two-step reaction: proline is first activated by ATP to form Pro-AMP and then transferred to the acceptor end of tRNA(Pro). The chain is Proline--tRNA ligase from Jannaschia sp. (strain CCS1).